Consider the following 286-residue polypeptide: Ribosomal RNA small subunit methyltransferase H (286 aa).

S-adenosyl-L-methionine is bound by residues 30–32, D49, F88, D97, and Q104; that span reads GGH. Positions 260-286 are disordered; sequence HPLQPSDEESFNNPASRSAKLRALEMR.

This sequence belongs to the methyltransferase superfamily. RsmH family.

It is found in the cytoplasm. It carries out the reaction cytidine(1402) in 16S rRNA + S-adenosyl-L-methionine = N(4)-methylcytidine(1402) in 16S rRNA + S-adenosyl-L-homocysteine + H(+). In terms of biological role, specifically methylates the N4 position of cytidine in position 1402 (C1402) of 16S rRNA. The sequence is that of Ribosomal RNA small subunit methyltransferase H from Solibacter usitatus (strain Ellin6076).